Here is a 527-residue protein sequence, read N- to C-terminus: L-amino-acid oxidase (527 aa).

A signal peptide spans 1-27; that stretch reads MDLHRAPWKSSAAAAVLLLALFSGAAA. Cys37 and Cys200 form a disulfide bridge. The N-linked (GlcNAc...) asparagine glycan is linked to Asn58. Residues 70–71, 90–91, Arg98, 114–117, and Val288 each bind FAD; these read VA, EA, and GAMR. Arg117 is a substrate binding site. An N-linked (GlcNAc...) asparagine glycan is attached at Asn393. Tyr403 is a binding site for substrate. FAD contacts are provided by residues Glu485 and 492-497; that span reads AWMESA. Residue 492 to 493 coordinates substrate; sequence AW.

As to quaternary structure, homodimer. It depends on FAD as a cofactor. In terms of tissue distribution, expression mainly observed in plasma, spleen, kidney and gills with low levels detected in blood and no expression detected in brain, liver, heart, muscle or intestine (at protein level).

The protein resides in the secreted. The catalysed reaction is an L-alpha-amino acid + O2 + H2O = a 2-oxocarboxylate + H2O2 + NH4(+). Its function is as follows. Inhibits the growth of both Gram-negative and Gram-positive bacteria. Displays strong antibacterial activity towards V.cholerae and E.tarda. Causes deformation of the surface of S.aureus and the formation of pores on the surface of E.coli. Strong antiparasitic activity is seen towards C.irritans, T.brucei and I.multifiliis. Cilia of treated theronts are lost and the macronucleus swells, inducing cell membrane rupture and efflux of the cytoplasm. In Siganus canaliculatus (White-spotted spinefoot), this protein is L-amino-acid oxidase.